The primary structure comprises 466 residues: UDP-N-acetylmuramate--L-alanine ligase (466 aa).

114 to 120 is a binding site for ATP; that stretch reads GTHGKTT.

Belongs to the MurCDEF family.

The protein localises to the cytoplasm. It catalyses the reaction UDP-N-acetyl-alpha-D-muramate + L-alanine + ATP = UDP-N-acetyl-alpha-D-muramoyl-L-alanine + ADP + phosphate + H(+). Its pathway is cell wall biogenesis; peptidoglycan biosynthesis. In terms of biological role, cell wall formation. This Chlorobium phaeobacteroides (strain DSM 266 / SMG 266 / 2430) protein is UDP-N-acetylmuramate--L-alanine ligase.